The primary structure comprises 173 residues: Ribulose bisphosphate carboxylase small subunit, chloroplastic 2 (173 aa).

A chloroplast-targeting transit peptide spans 1–33 (VVLSKECAKPLATPKVTLNKRGFATTIATKNRE).

It belongs to the RuBisCO small chain family. Heterohexadecamer of 8 large and 8 small subunits.

It localises to the plastid. The protein resides in the chloroplast. RuBisCO catalyzes two reactions: the carboxylation of D-ribulose 1,5-bisphosphate, the primary event in carbon dioxide fixation, as well as the oxidative fragmentation of the pentose substrate. Both reactions occur simultaneously and in competition at the same active site. Although the small subunit is not catalytic it is essential for maximal activity. This chain is Ribulose bisphosphate carboxylase small subunit, chloroplastic 2, found in Acetabularia acetabulum (Mermaid's wine glass).